The chain runs to 591 residues: Myelin expression factor 2 (591 aa).

The tract at residues 1 to 92 is disordered; sequence MADADKSEAA…GEKKGPNRNR (92 aa). Over residues 22-36 the composition is skewed to basic and acidic residues; the sequence is EPRRDTHPGEPEKPP. Lys44 participates in a covalent cross-link: Glycyl lysine isopeptide (Lys-Gly) (interchain with G-Cter in SUMO2). Basic and acidic residues-rich tracts occupy residues 45 to 63 and 74 to 87; these read MENDESVKEEKSDLKEKST and YSKDKNSGTGEKKG. RRM domains lie at 91 to 169 and 224 to 301; these read NRVF…EDPD and STIF…MDDK. Omega-N-methylarginine occurs at positions 397 and 417. Ser422 carries the phosphoserine modification. Residues 514 to 590 enclose the RRM 3 domain; it reads NQIFVRNLPF…REIDVRLDRN (77 aa).

In terms of assembly, monomer. As to expression, highly expressed in the brain.

It localises to the nucleus. In terms of biological role, transcriptional repressor of the myelin basic protein gene (MBP). Binds to the proximal MB1 element 5'-TTGTCC-3' of the MBP promoter. Its binding to MB1 and function are inhibited by PURA. The protein is Myelin expression factor 2 (Myef2) of Mus musculus (Mouse).